A 624-amino-acid chain; its full sequence is Mannosyl-oligosaccharide 1,2-alpha-mannosidase MNS3 (624 aa).

Topologically, residues 1–43 (MSKSLPYSVKDIHYDNAKFRHRSPLKVFSQSLLTLSTKRNYAS) are cytoplasmic. The chain crosses the membrane as a helical; Signal-anchor for type II membrane protein span at residues 44-64 (CSTGKFLILILFFGVACLMLM). At 65–624 (SKSPNESGLN…AHPLPIRRNT (560 aa)) the chain is on the lumenal side. 2 N-linked (GlcNAc...) asparagine glycosylation sites follow: Asn-69 and Asn-114. Positions 91-123 (LRKPPRLPPRLSPDEGQLRGSSTNGSTISNSDP) are disordered. Over residues 110–121 (GSSTNGSTISNS) the composition is skewed to low complexity. The active-site Proton donor is the Glu-212. The N-linked (GlcNAc...) asparagine glycan is linked to Asn-236. Residue Asp-357 is part of the active site. Residue Asn-377 is glycosylated (N-linked (GlcNAc...) asparagine). Residues Cys-428 and Cys-471 are joined by a disulfide bond. The active-site Proton donor is the Glu-485. Asn-503 is a glycosylation site (N-linked (GlcNAc...) asparagine). Residue Glu-526 is part of the active site. Thr-613 contributes to the Ca(2+) binding site.

This sequence belongs to the glycosyl hydrolase 47 family. Ca(2+) is required as a cofactor. It depends on Mn(2+) as a cofactor. Requires Mg(2+) as cofactor. In terms of tissue distribution, expressed in flowers, siliques, stems, leaves, roots, stamens and sepals.

The protein localises to the golgi apparatus. It is found in the cis-Golgi network membrane. It catalyses the reaction N(4)-(alpha-D-Man-(1-&gt;2)-alpha-D-Man-(1-&gt;2)-alpha-D-Man-(1-&gt;3)-[alpha-D-Man-(1-&gt;2)-alpha-D-Man-(1-&gt;3)-[alpha-D-Man-(1-&gt;2)-alpha-D-Man-(1-&gt;6)]-alpha-D-Man-(1-&gt;6)]-beta-D-Man-(1-&gt;4)-beta-D-GlcNAc-(1-&gt;4)-beta-D-GlcNAc)-L-asparaginyl-[protein] (N-glucan mannose isomer 9A1,2,3B1,2,3) + 4 H2O = N(4)-(alpha-D-Man-(1-&gt;3)-[alpha-D-Man-(1-&gt;3)-[alpha-D-Man-(1-&gt;6)]-alpha-D-Man-(1-&gt;6)]-beta-D-Man-(1-&gt;4)-beta-D-GlcNAc-(1-&gt;4)-beta-D-GlcNAc)-L-asparaginyl-[protein] (N-glucan mannose isomer 5A1,2) + 4 beta-D-mannose. The catalysed reaction is N(4)-(alpha-D-Man-(1-&gt;2)-alpha-D-Man-(1-&gt;2)-alpha-D-Man-(1-&gt;3)-[alpha-D-Man-(1-&gt;3)-[alpha-D-Man-(1-&gt;2)-alpha-D-Man-(1-&gt;6)]-alpha-D-Man-(1-&gt;6)]-beta-D-Man-(1-&gt;4)-beta-D-GlcNAc-(1-&gt;4)-beta-D-GlcNAc)-L-asparaginyl-[protein] (N-glucan mannose isomer 8A1,2,3B1,3) + 3 H2O = N(4)-(alpha-D-Man-(1-&gt;3)-[alpha-D-Man-(1-&gt;3)-[alpha-D-Man-(1-&gt;6)]-alpha-D-Man-(1-&gt;6)]-beta-D-Man-(1-&gt;4)-beta-D-GlcNAc-(1-&gt;4)-beta-D-GlcNAc)-L-asparaginyl-[protein] (N-glucan mannose isomer 5A1,2) + 3 beta-D-mannose. It carries out the reaction N(4)-(alpha-D-Man-(1-&gt;2)-alpha-D-Man-(1-&gt;2)-alpha-D-Man-(1-&gt;3)-[alpha-D-Man-(1-&gt;2)-alpha-D-Man-(1-&gt;3)-[alpha-D-Man-(1-&gt;2)-alpha-D-Man-(1-&gt;6)]-alpha-D-Man-(1-&gt;6)]-beta-D-Man-(1-&gt;4)-beta-D-GlcNAc-(1-&gt;4)-beta-D-GlcNAc)-L-asparaginyl-[protein] (N-glucan mannose isomer 9A1,2,3B1,2,3) + H2O = N(4)-(alpha-D-Man-(1-&gt;2)-alpha-D-Man-(1-&gt;2)-alpha-D-Man-(1-&gt;3)-[alpha-D-Man-(1-&gt;3)-[alpha-D-Man-(1-&gt;2)-alpha-D-Man-(1-&gt;6)]-alpha-D-Man-(1-&gt;6)]-beta-D-Man-(1-&gt;4)-beta-D-GlcNAc-(1-&gt;4)-beta-D-GlcNAc)-L-asparaginyl-[protein] (N-glucan mannose isomer 8A1,2,3B1,3) + beta-D-mannose. Its pathway is protein modification; protein glycosylation. With respect to regulation, inhibited by kifunensine and 1-deoxymannojirimycin, but not by swainsonine. Class I alpha-mannosidase essential for early N-glycan processing. Removes preferentially alpha-1,2-linked mannose residues from Man(9)GlcNAc(2) to produce Man(8)GlcNAc(2). Involved in root development and cell wall biosynthesis. The protein is Mannosyl-oligosaccharide 1,2-alpha-mannosidase MNS3 (MNS3) of Arabidopsis thaliana (Mouse-ear cress).